A 392-amino-acid chain; its full sequence is Methylthioribose-1-phosphate isomerase (392 aa).

D268 serves as the catalytic Proton donor.

Belongs to the eIF-2B alpha/beta/delta subunits family. MtnA subfamily.

It localises to the cytoplasm. The protein resides in the nucleus. The enzyme catalyses 5-(methylsulfanyl)-alpha-D-ribose 1-phosphate = 5-(methylsulfanyl)-D-ribulose 1-phosphate. It participates in amino-acid biosynthesis; L-methionine biosynthesis via salvage pathway; L-methionine from S-methyl-5-thio-alpha-D-ribose 1-phosphate: step 1/6. Catalyzes the interconversion of methylthioribose-1-phosphate (MTR-1-P) into methylthioribulose-1-phosphate (MTRu-1-P). The chain is Methylthioribose-1-phosphate isomerase from Ajellomyces capsulatus (strain G186AR / H82 / ATCC MYA-2454 / RMSCC 2432) (Darling's disease fungus).